A 446-amino-acid polypeptide reads, in one-letter code: Maltoporin (446 aa).

The signal sequence occupies residues 1-25 (MMITLRKLPLAVAVAAGVMSAQAMA).

This sequence belongs to the porin LamB (TC 1.B.3) family. In terms of assembly, homotrimer formed of three 18-stranded antiparallel beta-barrels, containing three independent channels.

It is found in the cell outer membrane. It catalyses the reaction beta-maltose(in) = beta-maltose(out). Functionally, involved in the transport of maltose and maltodextrins. In Escherichia coli O127:H6 (strain E2348/69 / EPEC), this protein is Maltoporin.